The chain runs to 135 residues: uncharacterized protein (135 aa).

This is an uncharacterized protein from Sinorhizobium fredii (strain NBRC 101917 / NGR234).